The chain runs to 660 residues: V-type ATP synthase subunit I (660 aa).

The next 7 membrane-spanning stretches (helical) occupy residues 312 to 332 (FFAFVLFFSMIVNDAGYGLLF), 362 to 382 (ILGLGCICWGTTTTSFFGMSF), 453 to 473 (FIDNILMELALFIGVVHLSLG), 485 to 505 (IGWILFMVSAYLYVPIYLGTV), 520 to 540 (GQIGYYGMFGGIGLAVVLAMI), 560 to 580 (VLSYLRIYALGLAGAMMGATF), and 593 to 613 (SIVILLGHSVNIILSIMGGVI).

It belongs to the V-ATPase 116 kDa subunit family.

It is found in the cell membrane. Its function is as follows. Produces ATP from ADP in the presence of a proton gradient across the membrane. This chain is V-type ATP synthase subunit I (atpI), found in Chlamydia pneumoniae (Chlamydophila pneumoniae).